The primary structure comprises 435 residues: Trigger factor (435 aa).

Residues 162–247 (GDRVIIDFKG…VKNVAEATLP (86 aa)) enclose the PPIase FKBP-type domain.

The protein belongs to the FKBP-type PPIase family. Tig subfamily.

Its subcellular location is the cytoplasm. The enzyme catalyses [protein]-peptidylproline (omega=180) = [protein]-peptidylproline (omega=0). Functionally, involved in protein export. Acts as a chaperone by maintaining the newly synthesized protein in an open conformation. Functions as a peptidyl-prolyl cis-trans isomerase. This Chromobacterium violaceum (strain ATCC 12472 / DSM 30191 / JCM 1249 / CCUG 213 / NBRC 12614 / NCIMB 9131 / NCTC 9757 / MK) protein is Trigger factor.